The chain runs to 440 residues: MENIQKLIARYPLVEDLVALKETTWFNPGATSLAQGLPYVGLTEQDVNAAHDRLARFAPYLAKAFPQTAAAGGMIESDVVAIPAMQKRLEKEYGQTINGEMLLKKDSHLAISGSIKARGGIYEVLTHAEKLALEAGLLTTDDDYSVLLSPEFKQFFSQYSIAVGSTGNLGLSIGIMSACIGFKVTVHMSADARAWKKAKLRSHGVTVVEYEDDYGVAVEQGRKAAQSDPNCFFIDDENSRTLFLGYAVAGQRLKAQFAQQGRVVDASHPLFVYLPCGVGGGPGGVAFGLKLAFGDNVHCFFAEPTHSPCMLLGVYTGLHDAISVQDIGIDNLTAADGLAVGRASGFVGRAMERLLDGLYTLDDQTMYDMLGWLAQEEGIRLEPSALAGMAGPQRICAAAAYQQRHGFSQTQLGNATHLVWATGGGMVPEDEMEQYLAKGR.

K116 is modified (N6-(pyridoxal phosphate)lysine).

Belongs to the serine/threonine dehydratase family. DsdA subfamily. As to quaternary structure, monomer. It depends on pyridoxal 5'-phosphate as a cofactor.

It catalyses the reaction D-serine = pyruvate + NH4(+). The chain is D-serine dehydratase from Salmonella dublin (strain CT_02021853).